The sequence spans 363 residues: Ribosomal RNA large subunit methyltransferase M (363 aa).

S-adenosyl-L-methionine-binding positions include Ser-194, 227 to 230, Asp-246, Asp-266, and Asp-284; that span reads CPGG. Lys-313 (proton acceptor) is an active-site residue.

The protein belongs to the class I-like SAM-binding methyltransferase superfamily. RNA methyltransferase RlmE family. RlmM subfamily. Monomer.

Its subcellular location is the cytoplasm. It catalyses the reaction cytidine(2498) in 23S rRNA + S-adenosyl-L-methionine = 2'-O-methylcytidine(2498) in 23S rRNA + S-adenosyl-L-homocysteine + H(+). Catalyzes the 2'-O-methylation at nucleotide C2498 in 23S rRNA. This is Ribosomal RNA large subunit methyltransferase M from Haemophilus influenzae (strain ATCC 51907 / DSM 11121 / KW20 / Rd).